A 641-amino-acid polypeptide reads, in one-letter code: Fructose-1,6-bisphosphatase class 3 (641 aa).

The protein belongs to the FBPase class 3 family. Requires Mn(2+) as cofactor.

It carries out the reaction beta-D-fructose 1,6-bisphosphate + H2O = beta-D-fructose 6-phosphate + phosphate. Its pathway is carbohydrate biosynthesis; gluconeogenesis. The polypeptide is Fructose-1,6-bisphosphatase class 3 (Latilactobacillus sakei subsp. sakei (strain 23K) (Lactobacillus sakei subsp. sakei)).